A 158-amino-acid polypeptide reads, in one-letter code: 18.2 kDa class I heat shock protein (158 aa).

The sHSP domain maps to 44–158 (ENSAFVSTRV…PEVKTIDISG (115 aa)).

It belongs to the small heat shock protein (HSP20) family. As to quaternary structure, forms oligomeric structures.

Its subcellular location is the cytoplasm. In Medicago sativa (Alfalfa), this protein is 18.2 kDa class I heat shock protein (HSP18.2).